A 316-amino-acid polypeptide reads, in one-letter code: tRNA dimethylallyltransferase (316 aa).

17 to 24 (GPTASGKT) contributes to the ATP binding site. Residue 19-24 (TASGKT) participates in substrate binding. 3 interaction with substrate tRNA regions span residues 42-45 (DSAL), 166-170 (QRLSR), and 247-252 (RCVGYR).

This sequence belongs to the IPP transferase family. Monomer. Mg(2+) is required as a cofactor.

It catalyses the reaction adenosine(37) in tRNA + dimethylallyl diphosphate = N(6)-dimethylallyladenosine(37) in tRNA + diphosphate. Its function is as follows. Catalyzes the transfer of a dimethylallyl group onto the adenine at position 37 in tRNAs that read codons beginning with uridine, leading to the formation of N6-(dimethylallyl)adenosine (i(6)A). This Citrobacter koseri (strain ATCC BAA-895 / CDC 4225-83 / SGSC4696) protein is tRNA dimethylallyltransferase.